The sequence spans 286 residues: Shikimate dehydrogenase (NADP(+)) (286 aa).

Shikimate contacts are provided by residues 19–21 (SVS) and Thr-66. Lys-70 acts as the Proton acceptor in catalysis. 2 residues coordinate shikimate: Asn-91 and Asp-106. NADP(+)-binding positions include 130 to 134 (GAGGS) and Ala-225. Position 227 (Tyr-227) interacts with shikimate. Gly-248 provides a ligand contact to NADP(+).

It belongs to the shikimate dehydrogenase family. As to quaternary structure, homodimer.

It catalyses the reaction shikimate + NADP(+) = 3-dehydroshikimate + NADPH + H(+). The protein operates within metabolic intermediate biosynthesis; chorismate biosynthesis; chorismate from D-erythrose 4-phosphate and phosphoenolpyruvate: step 4/7. Its function is as follows. Involved in the biosynthesis of the chorismate, which leads to the biosynthesis of aromatic amino acids. Catalyzes the reversible NADPH linked reduction of 3-dehydroshikimate (DHSA) to yield shikimate (SA). In Dehalococcoides mccartyi (strain ATCC BAA-2100 / JCM 16839 / KCTC 5957 / BAV1), this protein is Shikimate dehydrogenase (NADP(+)).